The primary structure comprises 891 residues: MLPKKYDPNEIEPKWQKYWLEEKIYKYRLDENKPSYAIDTPPPFTSGTLHLGHVLSHTWIDIIARYKRMRGYNVLFPQGFDNHGLPTELKVEKEFGITKDQPEEFLKKCVEWTWQAIEAMRKQFIRIGYSADWDLEYHTMDDWYKAAVQKSLLEFYKKGLIYREEHPVYWCPKCRTSLAKAEVGYVEEEGYLYYIKLPLADGSGYIPIATTRPELMPACVAVFVHPDDERYKHLVGKKVKLPIYEREVPILADEDVDPNFGTGAVYNCTYGDEQDIVWQKRYNLPVIIAINEDGTMNENAGPYAGLKVEEARKKIAEDLEKMGLLYKKEKIKHRVLRHTERSSCMAPIELLPKKQWFIRVKDFTDEIVKVAKEINWYPEDMFLRLKDWAESMDWDWVISRQRVFGTPFPFWVCKNGHIIPAREEDLPVDPRFDKPPVEKCPVCGAEIEPVTDVLDCWVDSSITPLIITRWHEAIKGDEEAKKWFEHNFPTALRPQGTDIIRTWAFYTIFRTFKLTGKKPWKDIVINGMVAGPDGRKMSKSYGNVVAPDEVIPKYGADALRLWTALAPPGEDHPFKWETVDYNFRFLQKVWNIYRFAERHIKDFDYEKYKDIELEPLDRWILSRLHRIIKFATEELERYRFNLITRELMTFIWHEVADDYIEMVKYRLYGDDEESKLKAKVALYELLYNVMLLLAPFVPHITEEIYHAMFKDKIGEKSVHLLSWPEYREDRIDEKAEKLGELARKVVSEMRKYKNSHGMPLNAKLEHVAIYALESYDDLKLIEKDIAGTMNIEKLEIFKGEPQLEERIVEVKPNYKRIGPRYGKLVPRIVEHLKNNAESIAREIKENGKVEFEIDGEKVELTKEDVMIKKEVFSEGERVETAVVDDIVILFF.

Positions 43 to 53 (PFTSGTLHLGH) match the 'HIGH' region motif. Residues 536–540 (KMSKS) carry the 'KMSKS' region motif. K539 contributes to the ATP binding site.

It belongs to the class-I aminoacyl-tRNA synthetase family. ValS type 2 subfamily.

It is found in the cytoplasm. It carries out the reaction tRNA(Val) + L-valine + ATP = L-valyl-tRNA(Val) + AMP + diphosphate. Its function is as follows. Catalyzes the attachment of valine to tRNA(Val). As ValRS can inadvertently accommodate and process structurally similar amino acids such as threonine, to avoid such errors, it has a 'posttransfer' editing activity that hydrolyzes mischarged Thr-tRNA(Val) in a tRNA-dependent manner. This is Valine--tRNA ligase from Pyrococcus abyssi (strain GE5 / Orsay).